Consider the following 138-residue polypeptide: Large ribosomal subunit protein uL16 (138 aa).

Positions 1–13 (MLQPARRKYRKEQ) are enriched in basic residues. Residues 1 to 22 (MLQPARRKYRKEQKGRNTGVAT) are disordered.

The protein belongs to the universal ribosomal protein uL16 family. As to quaternary structure, part of the 50S ribosomal subunit.

Functionally, binds 23S rRNA and is also seen to make contacts with the A and possibly P site tRNAs. This chain is Large ribosomal subunit protein uL16, found in Polaromonas naphthalenivorans (strain CJ2).